The primary structure comprises 86 residues: Electron transfer flavoprotein regulatory factor 1 (86 aa).

The protein belongs to the complex I LYR family. In terms of assembly, homotetramer. Interacts with NDUFAB1. Interacts with ETFA. Interacts with ETFB.

It localises to the mitochondrion. Functionally, acts as a regulator of the electron transfer flavoprotein by promoting the removal of flavin from the ETF holoenzyme (composed of ETFA and ETFB). This is Electron transfer flavoprotein regulatory factor 1 from Mus musculus (Mouse).